The sequence spans 173 residues: Co-chaperone protein HscB homolog (173 aa).

In terms of domain architecture, J spans 5-77 (CHYALFDLQP…PRRARYLLAI (73 aa)).

Belongs to the HscB family. As to quaternary structure, interacts with HscA and stimulates its ATPase activity.

Co-chaperone involved in the maturation of iron-sulfur cluster-containing proteins. Seems to help targeting proteins to be folded toward HscA. The polypeptide is Co-chaperone protein HscB homolog (Pseudomonas putida (strain ATCC 700007 / DSM 6899 / JCM 31910 / BCRC 17059 / LMG 24140 / F1)).